Here is a 333-residue protein sequence, read N- to C-terminus: MIDTTLPLTDIHRHLDGNIRPQTILELGRQYNISLPAQSLETLIPHVQVIANEPDLVSFLTKLDWGVKVLASLDACRRVAFENIEDAARHGLHYVELRFSPGYMAMAHQLPVAGVVEAVIDGVREGCRTFGVQAKLIGIMSRTFGEAACQQELEAFLAHRDQITALDLAGDELGFPGSLFLSHFNRARDAGWHITVHAGEAAGPESIWQAIRELGAERIGHGVKAIEDRALMDFLAEQQIGIESCLTSNIQTSSVAELAAHPLKTFLEHGIRASINTDDPGVQGVDIIHEYTVAAPAAGLSREQIRQAQINGLEMAFLSAEEKRALREKVAAK.

His12 and His14 together coordinate Zn(2+). Residues His14, Asp16, and Gly170 each contribute to the substrate site. Residue His197 coordinates Zn(2+). The Proton donor role is filled by Glu200. Zn(2+) is bound at residue Asp278. Residue Asp279 coordinates substrate.

The protein belongs to the metallo-dependent hydrolases superfamily. Adenosine and AMP deaminases family. Adenosine deaminase subfamily. Requires Zn(2+) as cofactor.

It carries out the reaction adenosine + H2O + H(+) = inosine + NH4(+). It catalyses the reaction 2'-deoxyadenosine + H2O + H(+) = 2'-deoxyinosine + NH4(+). In terms of biological role, catalyzes the hydrolytic deamination of adenosine and 2-deoxyadenosine. The polypeptide is Adenosine deaminase (Escherichia coli (strain SE11)).